We begin with the raw amino-acid sequence, 647 residues long: MMQALTMRSWLATLVTALLAVAIWPDPGQSLPQGAPETVCDTMLPFHSGGSVLPQNSVSPFSVETSSSTLGQGQTLRVDLTGVPAGLSFGGYMIQARNRNPPHQIIGQFGPARDGTIKLMNCENSVNNSATHSNAGPKQQVILEWQSPVDFLGQVVFNATIAQSYNEFWVGVPSQPVQIVRRDLSAAPPLPTQSPSAPAGTTRAPYVPPSYVAPNNVVAVSSDPIYNGCGQSKNCFGFPDGCVATKSCTSITVVTVRGDVFEFEIQSGKGTNAAYVAVGLSDDAKMGDDLTTECVPENGRVNLYSSLTSASPYSAVRSNVNQNSARLLDASIVDGVIYCRVQRDAVTNVQGRTFDLRNGKYHLLVASGSSLKENSVGYHDIGRLPSAQPINLAEVQDLSGSSRLLIQLHGAFMIAAWIGTTSLGIIFARYFKQTWVGSQSCGTDQWFAWHRLLMVTTWSLTVAAYVLIWVELKQAVWHAHSIIGLITVILCFIQPIGALFRPGPNDKKRPYFNWGHWLGGNLAHILGIVTIFFSVKLPKAELPEWMDWILVSFVVVHVLVHLIFSIGGMASERHLSQRANTFQMGDMSHHQQHAMRNGMSMERKMDAPYAGMRKGLLGVYGVVLILFVTVLILLVVLAPIEQFLGKS.

Residues 10–30 (WLATLVTALLAVAIWPDPGQS) traverse the membrane as a helical segment. The Reelin domain occupies 25 to 195 (PDPGQSLPQG…AAPPLPTQSP (171 aa)). N-linked (GlcNAc...) asparagine glycans are attached at residues Asn-127 and Asn-158. The DOMON domain maps to 245–368 (TKSCTSITVV…GKYHLLVASG (124 aa)). In terms of domain architecture, Cytochrome b561 spans 372-570 (KENSVGYHDI…HLIFSIGGMA (199 aa)). Residues 408-428 (LHGAFMIAAWIGTTSLGIIFA) traverse the membrane as a helical segment. Heme b is bound by residues His-409 and His-450. The next 5 membrane-spanning stretches (helical) occupy residues 452–472 (LLMVTTWSLTVAAYVLIWVEL), 480–500 (HSIIGLITVILCFIQPIGALF), 515–535 (GHWLGGNLAHILGIVTIFFSV), 548–568 (WILVSFVVVHVLVHLIFSIGG), and 616–636 (LLGVYGVVLILFVTVLILLVV). The heme b site is built by His-480 and His-516.

It belongs to the FRRS1 family. It depends on heme b as a cofactor.

Its subcellular location is the membrane. In terms of biological role, putative ferric-chelate reductases reduce Fe(3+) to Fe(2+) before its transport from the endosome to the cytoplasm. This is Putative ferric-chelate reductase 1 homolog from Drosophila melanogaster (Fruit fly).